The primary structure comprises 225 residues: MGIKDWPQGEGPREKLLLKGAGHLSDAELLAVILRNGLAGQNAVDLARNMINQFGGLRSLLSASKSQVCKLAGVGPVKYAQLQAAVEISKRIAHENLQRGQILTNPDLTRDYLMRQLADRSYEVFALLLLDTQHRVIQFVELFRGTIDSASVYPREVVSLVLEKKAAAVIVCHNHPSGIAEPSQADRRITERIKNALATIDVSLLDHMVVGDQEIVSFAERGWIV.

One can recognise an MPN domain in the interval 102–224 (ILTNPDLTRD…IVSFAERGWI (123 aa)). Zn(2+) contacts are provided by His173, His175, and Asp186. The JAMM motif motif lies at 173–186 (HNHPSGIAEPSQAD).

It belongs to the UPF0758 family.

The protein is UPF0758 protein Sfri_3828 of Shewanella frigidimarina (strain NCIMB 400).